The chain runs to 490 residues: Cytochrome P450 2C38 (490 aa).

Positions 1-20 (MDLVTFLVLTLSSLILLSLW) are cleaved as a signal peptide. A heme-binding site is contributed by C435.

This sequence belongs to the cytochrome P450 family. It depends on heme as a cofactor. In terms of tissue distribution, liver, brain, kidney, and intestine, with trace amounts in lung and heart.

It is found in the endoplasmic reticulum membrane. Its subcellular location is the microsome membrane. It carries out the reaction an organic molecule + reduced [NADPH--hemoprotein reductase] + O2 = an alcohol + oxidized [NADPH--hemoprotein reductase] + H2O + H(+). It catalyses the reaction (5Z,8Z,11Z,14Z)-eicosatetraenoate + reduced [NADPH--hemoprotein reductase] + O2 = 11,12-epoxy-(5Z,8Z,14Z)-eicosatrienoate + oxidized [NADPH--hemoprotein reductase] + H2O + H(+). It functions in the pathway lipid metabolism; arachidonate metabolism. Its function is as follows. A cytochrome P450 monooxygenase that primarily catalyzes the epoxidation of 11,12 double bond of (5Z,8Z,11Z,14Z)-eicosatetraenoic acid (arachidonate) forming 11,12-epoxyeicosatrienoic acid (11,12-EET) regioisomer. Mechanistically, uses molecular oxygen inserting one oxygen atom into a substrate, and reducing the second into a water molecule, with two electrons provided by NADPH via cytochrome P450 reductase (CPR; NADPH--hemoprotein reductase). This chain is Cytochrome P450 2C38, found in Mus musculus (Mouse).